Here is a 757-residue protein sequence, read N- to C-terminus: Voltage-gated potassium channel KCNC3 (757 aa).

The interval 1-78 is important for normal N-type inactivation; the sequence is MLSSVCVSSF…CPGLPAAAMG (78 aa). The segment at 1–87 is disordered; sequence MLSSVCVSSF…GRHGGGGGDS (87 aa). At 1-290 the chain is on the cytoplasmic side; that stretch reads MLSSVCVSSF…EDPYSSRAAR (290 aa). A compositionally biased stretch (pro residues) spans 21–40; the sequence is PAPPPQPPESPPPPPLPPQQ. Over residues 41-52 the composition is skewed to low complexity; that stretch reads QQPAQPGPAASP. Residues histidine 157, cysteine 163, cysteine 184, and cysteine 185 each coordinate Zn(2+). A compositionally biased stretch (low complexity) spans 210-219; sequence AANAANAAGA. The tract at residues 210-232 is disordered; sequence AANAANAAGAHDGGLDDEAGAGG. A helical transmembrane segment spans residues 291–309; sequence YVAFASLFFILISITTFCL. N-linked (GlcNAc...) asparagine glycans are attached at residues asparagine 320 and asparagine 336. The chain crosses the membrane as a helical span at residues 351-370; it reads VEGVCVVWFTFEFLMRITFC. Topologically, residues 371 to 379 are cytoplasmic; that stretch reads PDKVEFLKS. A helical transmembrane segment spans residues 380–398; the sequence is SLNIIDCVAILPFYLEVGL. Residues 412–434 traverse the membrane as a helical; Voltage-sensor segment; sequence FLRVVRFVRILRIFKLTRHFVGL. At 435–447 the chain is on the cytoplasmic side; it reads RVLGHTLRASTNE. Residues 448–469 form a helical membrane-spanning segment; that stretch reads FLLLIIFLALGVLIFATMIYYA. N-linked (GlcNAc...) asparagine glycosylation occurs at asparagine 483. The K(+) site is built by threonine 503, leucine 504, glycine 505, and tyrosine 506. Positions 503 to 508 match the Selectivity filter motif; that stretch reads TLGYGD. The helical transmembrane segment at 518–539 threads the bilayer; it reads LVGALCALAGVLTIAMPVPVIV. Over 540–757 the chain is Cytoplasmic; that stretch reads NNFGMYYSLA…NANAAAWISP (218 aa). The disordered stretch occupies residues 556–613; that stretch reads PKKKNKHIPRPPQPGSPNYCKPDPPPPPPPHPHHGSGGISPPPPITPPSMGVTVAGAY. At arginine 625 the chain carries Omega-N-methylarginine. The disordered stretch occupies residues 682–746; the sequence is QPAMSPEDKS…KPGPPSFLPD (65 aa). 2 positions are modified to phosphoserine: serine 686 and serine 691. Pro residues predominate over residues 728-743; it reads PPLPPQDWRKPGPPSF.

Belongs to the potassium channel family. C (Shaw) (TC 1.A.1.2) subfamily. Kv3.3/KCNC3 sub-subfamily. In terms of assembly, homotetramer. Heterotetramer with KCNC1. Interacts (via C-terminus) with HAX1; this interaction modulates channel gating. Identified in a complex with ACTR3, a subunit of the Arp2/3 complex; this interaction is indirect and depends on the presence of HAX1. Post-translationally, N-glycosylated.

It is found in the cell membrane. Its subcellular location is the presynaptic cell membrane. The protein resides in the perikaryon. It localises to the cell projection. The protein localises to the axon. It is found in the dendrite. Its subcellular location is the dendritic spine membrane. The protein resides in the cytoplasm. It localises to the cell cortex. The protein localises to the cytoskeleton. The catalysed reaction is K(+)(in) = K(+)(out). Its function is as follows. Voltage-gated potassium channel that plays an important role in the rapid repolarization of fast-firing brain neurons. The channel opens in response to the voltage difference across the membrane, forming a potassium-selective channel through which potassium ions pass in accordance with their electrochemical gradient. The channel displays rapid activation and inactivation kinetics. It plays a role in the regulation of the frequency, shape and duration of action potentials in Purkinje cells. Required for normal survival of cerebellar neurons, probably via its role in regulating the duration and frequency of action potentials that in turn regulate the activity of voltage-gated Ca(2+) channels and cellular Ca(2+) homeostasis. Required for normal motor function. Plays a role in the reorganization of the cortical actin cytoskeleton and the formation of actin veil structures in neuronal growth cones via its interaction with HAX1 and the Arp2/3 complex. The polypeptide is Voltage-gated potassium channel KCNC3 (KCNC3) (Homo sapiens (Human)).